A 408-amino-acid polypeptide reads, in one-letter code: 8-amino-7-oxononanoate synthase (408 aa).

Arginine 20 contacts substrate. 119 to 120 (GY) provides a ligand contact to pyridoxal 5'-phosphate. Histidine 144 contributes to the substrate binding site. Positions 190, 218, and 246 each coordinate pyridoxal 5'-phosphate. Lysine 249 bears the N6-(pyridoxal phosphate)lysine mark. Threonine 372 contributes to the substrate binding site.

Belongs to the class-II pyridoxal-phosphate-dependent aminotransferase family. BioF subfamily. Homodimer. Pyridoxal 5'-phosphate serves as cofactor.

It catalyses the reaction 6-carboxyhexanoyl-[ACP] + L-alanine + H(+) = (8S)-8-amino-7-oxononanoate + holo-[ACP] + CO2. Its pathway is cofactor biosynthesis; biotin biosynthesis. Catalyzes the decarboxylative condensation of pimeloyl-[acyl-carrier protein] and L-alanine to produce 8-amino-7-oxononanoate (AON), [acyl-carrier protein], and carbon dioxide. The protein is 8-amino-7-oxononanoate synthase of Leptothrix cholodnii (strain ATCC 51168 / LMG 8142 / SP-6) (Leptothrix discophora (strain SP-6)).